The sequence spans 732 residues: MGRKEDNIAKAMKLIEIPERIRNIDIAAHIDHGKTTLSDNLIAGAGMMSEDLAGKQLLLDYDEQEQARGITINAANASMVHEVDGKEYLINLIDTPGHVDFGGDVTRAMRAVDGTIIVVDSVEGVMPQTETVVRQALKEKVKPVLFINKVDRLINELKLNAEEMQKRFVKIITDVNRLITKYAPPEFSKQWQVNVQAGTVAFGSAYNNWALSVPAMNIFKISFKEIYDYVSTGRQKELAKKAPLHKVVLDMVIKNLPNPREAQKYRIPQIWKGDLDSEIGKAMLSCDDNGPVSMMVTKIIIDPHAGEIAVGRLFSGIIRKGSELYVSGAGKTKVQVLSMMVGPDRIPIDEIAAGNIVAIIGLKGAIAGSTVSSLSDMEPFEPMTHYTDPVVTLAIEAKHTADLPKLIDVLRTISKADPSIQVDINQETGEHLISGMGELHLEVTIYRIKNDYKVDVVTSEPLVVYRETVDKKGGPFEGKSPNKHNRFYFQVEPLPENVVSAILDGKIPEGSKFKDKKAVMANLEEAGLTHDEARGLVCIYGTNVMLDMTKGIQYLDETMELLIESFNEAMDKGPLANEKVYGLKVSLMDAKLHEDSIHRGPAQVIPAGRNSIYGAMCEAGRVLLEPMQKVFISVPQEIMGSVTNELQQRRGVVEDMQQNGEEITIIAKVPVAGMIGFASAIRSATGGKVIWNSENAGYQRVPYEMQKDVVAKIRERKGLKPEPYNEEYYASL.

Positions 19–260 constitute a tr-type G domain; that stretch reads ERIRNIDIAA…MVIKNLPNPR (242 aa). GTP contacts are provided by residues 28–35, 94–98, and 148–151; these read AHIDHGKT, DTPGH, and NKVD. Residue His-598 is modified to Diphthamide.

The protein belongs to the TRAFAC class translation factor GTPase superfamily. Classic translation factor GTPase family. EF-G/EF-2 subfamily.

It localises to the cytoplasm. Its function is as follows. Catalyzes the GTP-dependent ribosomal translocation step during translation elongation. During this step, the ribosome changes from the pre-translocational (PRE) to the post-translocational (POST) state as the newly formed A-site-bound peptidyl-tRNA and P-site-bound deacylated tRNA move to the P and E sites, respectively. Catalyzes the coordinated movement of the two tRNA molecules, the mRNA and conformational changes in the ribosome. The protein is Elongation factor 2 of Picrophilus torridus (strain ATCC 700027 / DSM 9790 / JCM 10055 / NBRC 100828 / KAW 2/3).